Here is a 692-residue protein sequence, read N- to C-terminus: Elongation factor G (692 aa).

In terms of domain architecture, tr-type G spans 8 to 282 (DKTRNIGIMA…AVLDYLPAPT (275 aa)). Residues 17 to 24 (AHIDAGKT), 81 to 85 (DTPGH), and 135 to 138 (NKMD) contribute to the GTP site.

Belongs to the TRAFAC class translation factor GTPase superfamily. Classic translation factor GTPase family. EF-G/EF-2 subfamily.

Its subcellular location is the cytoplasm. Functionally, catalyzes the GTP-dependent ribosomal translocation step during translation elongation. During this step, the ribosome changes from the pre-translocational (PRE) to the post-translocational (POST) state as the newly formed A-site-bound peptidyl-tRNA and P-site-bound deacylated tRNA move to the P and E sites, respectively. Catalyzes the coordinated movement of the two tRNA molecules, the mRNA and conformational changes in the ribosome. The polypeptide is Elongation factor G (Bacillus pumilus (strain SAFR-032)).